The sequence spans 277 residues: Probable endonuclease 4 (277 aa).

The Zn(2+) site is built by His-67, His-107, Glu-142, Asp-176, His-179, His-211, Asp-224, His-226, and Glu-256.

This sequence belongs to the AP endonuclease 2 family. Zn(2+) is required as a cofactor.

The enzyme catalyses Endonucleolytic cleavage to 5'-phosphooligonucleotide end-products.. In terms of biological role, endonuclease IV plays a role in DNA repair. It cleaves phosphodiester bonds at apurinic or apyrimidinic (AP) sites, generating a 3'-hydroxyl group and a 5'-terminal sugar phosphate. The chain is Probable endonuclease 4 from Clostridium botulinum (strain Alaska E43 / Type E3).